The following is a 267-amino-acid chain: Small ribosomal subunit protein eS4 (267 aa).

The 63-residue stretch at 42–104 folds into the S4 RNA-binding domain; it reads LPLILVLRNR…TKENFRLLFD (63 aa).

Belongs to the eukaryotic ribosomal protein eS4 family.

It localises to the cytoplasm. This Dictyostelium discoideum (Social amoeba) protein is Small ribosomal subunit protein eS4 (rps4).